Reading from the N-terminus, the 556-residue chain is Genetic interactor of prohibitins 3, mitochondrial (556 aa).

Residues 1-21 constitute a mitochondrion transit peptide; sequence MLNLCHALRGVRQFSCSVIVK. Positions 113 to 305 constitute a CP-type G domain; that stretch reads ESTLNDILNY…LFDLPGYSTS (193 aa).

This sequence belongs to the TRAFAC class YlqF/YawG GTPase family. GEP3 subfamily.

The protein localises to the mitochondrion. Functionally, interacts genetically with prohibitins and thus may be involved in the mitochondrial lipid metabolism. The chain is Genetic interactor of prohibitins 3, mitochondrial (GEP3) from Saccharomyces cerevisiae (strain ATCC 204508 / S288c) (Baker's yeast).